A 214-amino-acid polypeptide reads, in one-letter code: Peroxiredoxin 2 (214 aa).

The region spanning 1-157 (MKLYQKFPET…LLRITKAMIV (157 aa)) is the Thioredoxin domain. The active-site Cysteine sulfenic acid (-SOH) intermediate is the Cys-45. Arg-120 serves as a coordination point for substrate.

The protein belongs to the peroxiredoxin family. Prx6 subfamily. Homodecamer. Pentamer of dimers that assemble into a ring structure.

The protein resides in the cytoplasm. It carries out the reaction a hydroperoxide + [thioredoxin]-dithiol = an alcohol + [thioredoxin]-disulfide + H2O. Thiol-specific peroxidase that catalyzes the reduction of hydrogen peroxide and organic hydroperoxides to water and alcohols, respectively. Plays a role in cell protection against oxidative stress by detoxifying peroxides. The protein is Peroxiredoxin 2 of Sulfuracidifex metallicus (Sulfolobus metallicus).